The chain runs to 892 residues: Chromodomain-helicase-DNA-binding protein 3 (892 aa).

Over residues 1–20 (MSSKRGADPDWKTPGKASKD) the composition is skewed to basic and acidic residues. The tract at residues 1–29 (MSSKRGADPDWKTPGKASKDKRPKTNAKK) is disordered. A PHD-type zinc finger spans residues 35–82 (EEYCKVCSDGGDLLCCDSCPSVYHRTCLSPPLKSIPKGDWICPRCIPL). Chromo domains are found at residues 84–156 (GKAE…PSLE) and 179–240 (LLVQ…GRQR). One can recognise a Helicase ATP-binding domain in the interval 279–458 (RYSWGQGIPT…FHLLNFLSSG (180 aa)). 292–299 (DEMGLGKT) lines the ATP pocket. The short motif at 409–412 (DEAH) is the DEAH box element. A Helicase C-terminal domain is found at 590–739 (LLSKMLKQLK…LTHLVVRPGM (150 aa)). A disordered region spans residues 839-892 (SQPKLPKKQKKQSQQSQVDVESIMGKGKRIRKEIDYSNQYPSPNRATPSSIVLM). Polar residues predominate over residues 874 to 892 (YSNQYPSPNRATPSSIVLM).

The protein belongs to the SNF2/RAD54 helicase family. Monomer.

The protein localises to the nucleus. The protein resides in the chromosome. The enzyme catalyses ATP + H2O = ADP + phosphate + H(+). With respect to regulation, ATPase activity is stimulated by binding to DNA or nucleosomes, but is strongly activated by nucleosomes. ATP-dependent chromatin-remodeling factor which acts in nucleosome-remodeling by catalyzing ATP-dependent nucleosome mobilization. Likely to be involved in the regulation of transcription. This chain is Chromodomain-helicase-DNA-binding protein 3, found in Drosophila melanogaster (Fruit fly).